Consider the following 331-residue polypeptide: Cathepsin 7 (331 aa).

The N-terminal stretch at 1 to 17 (MTPTVFLSILCLGVALA) is a signal peptide. Positions 18–111 (APAPDYNLDA…GKHIQKRNPK (94 aa)) are cleaved as a propeptide — activation peptide. Residues 33 to 50 (KRSNDRTYSPEEEKQRRA) carry the Nuclear localization signal motif. Asn-72 is a glycosylation site (N-linked (GlcNAc...) asparagine). 3 disulfides stabilise this stretch: Cys-133–Cys-176, Cys-167–Cys-209, and Cys-267–Cys-320. The active site involves Cys-136. Catalysis depends on residues His-274 and Asn-298.

The protein belongs to the peptidase C1 family. As to expression, expressed in placenta. Expressed in parietal and spiral artery-associated trophoblast giant cells, most abundantly during the phase of trophoblast invasion. From 14.5 dpc onwards, expressed at lower levels in labyrinth trophoblast cells. Expressed in trophoblast stem cells. Expressed in heart, liver and testis.

It localises to the endosome. The protein localises to the lysosome. Its subcellular location is the cytoplasm. It is found in the perinuclear region. The protein resides in the golgi apparatus. It localises to the nucleus. The protein localises to the secreted. Its subcellular location is the extracellular space. Involved in trophoblast cell proliferation and differentiation probably by affecting mitotic cell cycle progression. Proteolytic activity and nuclear localization are essential for its role in cell cycle progression. The sequence is that of Cathepsin 7 from Mus musculus (Mouse).